The chain runs to 158 residues: 6,7-dimethyl-8-ribityllumazine synthase (158 aa).

5-amino-6-(D-ribitylamino)uracil is bound by residues phenylalanine 22, 57–59, and 81–83; these read AVE and AVI. 86-87 is a (2S)-2-hydroxy-3-oxobutyl phosphate binding site; that stretch reads GT. The Proton donor role is filled by histidine 89. Residue phenylalanine 114 participates in 5-amino-6-(D-ribitylamino)uracil binding. A (2S)-2-hydroxy-3-oxobutyl phosphate-binding site is contributed by arginine 128.

Belongs to the DMRL synthase family. In terms of assembly, forms an icosahedral capsid composed of 60 subunits, arranged as a dodecamer of pentamers.

It catalyses the reaction (2S)-2-hydroxy-3-oxobutyl phosphate + 5-amino-6-(D-ribitylamino)uracil = 6,7-dimethyl-8-(1-D-ribityl)lumazine + phosphate + 2 H2O + H(+). It functions in the pathway cofactor biosynthesis; riboflavin biosynthesis; riboflavin from 2-hydroxy-3-oxobutyl phosphate and 5-amino-6-(D-ribitylamino)uracil: step 1/2. Catalyzes the formation of 6,7-dimethyl-8-ribityllumazine by condensation of 5-amino-6-(D-ribitylamino)uracil with 3,4-dihydroxy-2-butanone 4-phosphate. This is the penultimate step in the biosynthesis of riboflavin. The polypeptide is 6,7-dimethyl-8-ribityllumazine synthase (Shewanella halifaxensis (strain HAW-EB4)).